The chain runs to 367 residues: Pantothenate kinase CAB1 (367 aa).

Belongs to the type II pantothenate kinase family.

The protein localises to the cytoplasm. Its subcellular location is the nucleus. The enzyme catalyses (R)-pantothenate + ATP = (R)-4'-phosphopantothenate + ADP + H(+). It participates in cofactor biosynthesis; coenzyme A biosynthesis; CoA from (R)-pantothenate: step 1/5. Regulated by feedback inhibition by malonyl-CoA. Its function is as follows. Plays a role in the physiological regulation of the intracellular CoA concentration. In Saccharomyces cerevisiae (strain ATCC 204508 / S288c) (Baker's yeast), this protein is Pantothenate kinase CAB1 (CAB1).